The primary structure comprises 140 residues: Natriuretic peptides A (140 aa).

The N-terminal stretch at 1 to 24 (MDTRGSFSCGFLLLLLIQLQPSRA) is a signal peptide. Positions 25 to 111 (NPIYNLSPAK…KRLRGVQMPR (87 aa)) are excised as a propeptide. The interval 55–94 (ALESNPDLQEPQTQEEIPPELTDDSDEQKAEPKLASNTPL) is disordered. Over residues 71–80 (IPPELTDDSD) the composition is skewed to acidic residues. A disulfide bridge links Cys118 with Cys134.

Belongs to the natriuretic peptide family. Cleaved by CORIN upon secretion to produce the functional hormone.

The protein resides in the secreted. In terms of biological role, hormone playing a key role in cardiovascular homeostasis through regulation of natriuresis, diuresis, and vasodilation. Specifically binds and stimulates the cGMP production of the NPR1 receptor. Binds the clearance receptor NPR3. In Gallus gallus (Chicken), this protein is Natriuretic peptides A (NPPA).